The following is a 238-amino-acid chain: Sugar fermentation stimulation protein homolog (238 aa).

This sequence belongs to the SfsA family.

The protein is Sugar fermentation stimulation protein homolog of Histophilus somni (strain 129Pt) (Haemophilus somnus).